We begin with the raw amino-acid sequence, 239 residues long: Biosynthetic peptidoglycan transglycosylase (239 aa).

A helical transmembrane segment spans residues 29–49 (GMFGLGALMLVWIVAYAVVPV).

It belongs to the glycosyltransferase 51 family.

Its subcellular location is the cell inner membrane. The catalysed reaction is [GlcNAc-(1-&gt;4)-Mur2Ac(oyl-L-Ala-gamma-D-Glu-L-Lys-D-Ala-D-Ala)](n)-di-trans,octa-cis-undecaprenyl diphosphate + beta-D-GlcNAc-(1-&gt;4)-Mur2Ac(oyl-L-Ala-gamma-D-Glu-L-Lys-D-Ala-D-Ala)-di-trans,octa-cis-undecaprenyl diphosphate = [GlcNAc-(1-&gt;4)-Mur2Ac(oyl-L-Ala-gamma-D-Glu-L-Lys-D-Ala-D-Ala)](n+1)-di-trans,octa-cis-undecaprenyl diphosphate + di-trans,octa-cis-undecaprenyl diphosphate + H(+). It participates in cell wall biogenesis; peptidoglycan biosynthesis. Functionally, peptidoglycan polymerase that catalyzes glycan chain elongation from lipid-linked precursors. This Jannaschia sp. (strain CCS1) protein is Biosynthetic peptidoglycan transglycosylase.